The chain runs to 490 residues: RNA-binding post-transcriptional regulator cip1 (490 aa).

Disordered stretches follow at residues 16–63, 76–97, and 138–199; these read RGLA…GSSA, ASSR…YSQL, and HNVS…GEDT. The span at 34–62 shows a compositional bias: polar residues; the sequence is RLQSPLNSPKLQPIGSPQASRKTSGSGSS. Ser37, Ser41, Ser49, Ser86, and Ser141 each carry phosphoserine. Composition is skewed to low complexity over residues 76–88 and 141–160; these read ASSR…PSDS and SPPS…ASGK. Residues 164–192 are compositionally biased toward polar residues; that stretch reads ADTSAEPSLDAFNSTQIKAGSTANSNSTP. One can recognise an RRM domain in the interval 202–280; sequence TAIVVKNIPF…RRLRVEWKRQ (79 aa). Residues Ser397, Ser401, and Ser427 each carry the phosphoserine modification. Thr431 carries the post-translational modification Phosphothreonine. 3 positions are modified to phosphoserine: Ser435, Ser456, and Ser466. Positions 457–490 are disordered; it reads PLQKASTLSSPFNSKNDNDASTSASKQSFGVSHF.

As to quaternary structure, interacts with csx1. Post-translationally, phosphorylated by sty1.

It is found in the cytoplasm. In terms of biological role, regulates global gene expression after oxidative stress. Interacts and stabilizes mRNAs and may regulate their transition between different cytoplasmic components after oxidative stress. This chain is RNA-binding post-transcriptional regulator cip1 (cip1), found in Schizosaccharomyces pombe (strain 972 / ATCC 24843) (Fission yeast).